Consider the following 228-residue polypeptide: Ribulose-phosphate 3-epimerase (228 aa).

A substrate-binding site is contributed by serine 9. Positions 34, 36, 68, and 177 each coordinate a divalent metal cation. Catalysis depends on aspartate 36, which acts as the Proton acceptor. Substrate contacts are provided by residues histidine 68, 177–179, and 199–200; these read DGG and GS. Aspartate 177 functions as the Proton donor in the catalytic mechanism.

The protein belongs to the ribulose-phosphate 3-epimerase family. A divalent metal cation is required as a cofactor.

The catalysed reaction is D-ribulose 5-phosphate = D-xylulose 5-phosphate. It functions in the pathway carbohydrate degradation. Its function is as follows. Catalyzes the reversible epimerization of D-ribulose 5-phosphate to D-xylulose 5-phosphate. This is Ribulose-phosphate 3-epimerase from Buchnera aphidicola subsp. Acyrthosiphon pisum (strain APS) (Acyrthosiphon pisum symbiotic bacterium).